The following is a 282-amino-acid chain: Phosphate transport system permease protein PstA (282 aa).

6 helical membrane passes run 22–42 (LSYISVIIGLFWLCWILFTLI), 71–91 (LIGSFFIVGAGTLIGTPIGVL), 111–131 (FLNDILLSAPSIIIGLFVYSL), 136–156 (IEHFSGWAGAFALALLLIPIV), 198–218 (ILTGVLLAVARISGETAPLLF), and 254–274 (NLAWAGAALITLFVLCLNIFT). Residues 71–274 (LIGSFFIVGA…LFVLCLNIFT (204 aa)) enclose the ABC transmembrane type-1 domain.

It belongs to the binding-protein-dependent transport system permease family. CysTW subfamily.

It localises to the cell inner membrane. Its function is as follows. Part of the binding-protein-dependent transport system for phosphate; probably responsible for the translocation of the substrate across the membrane. This chain is Phosphate transport system permease protein PstA (pstA), found in Haemophilus influenzae (strain ATCC 51907 / DSM 11121 / KW20 / Rd).